A 326-amino-acid polypeptide reads, in one-letter code: DNA-directed RNA polymerase subunit alpha (326 aa).

Residues M1–E232 form an alpha N-terminal domain (alpha-NTD) region. The segment at F246–E326 is alpha C-terminal domain (alpha-CTD).

It belongs to the RNA polymerase alpha chain family. In terms of assembly, homodimer. The RNAP catalytic core consists of 2 alpha, 1 beta, 1 beta' and 1 omega subunit. When a sigma factor is associated with the core the holoenzyme is formed, which can initiate transcription.

The catalysed reaction is RNA(n) + a ribonucleoside 5'-triphosphate = RNA(n+1) + diphosphate. DNA-dependent RNA polymerase catalyzes the transcription of DNA into RNA using the four ribonucleoside triphosphates as substrates. The sequence is that of DNA-directed RNA polymerase subunit alpha from Ruthia magnifica subsp. Calyptogena magnifica.